The following is a 230-amino-acid chain: Cytidylate kinase (230 aa).

12 to 20 contributes to the ATP binding site; the sequence is GPSGAGKGT.

It belongs to the cytidylate kinase family. Type 1 subfamily.

Its subcellular location is the cytoplasm. It carries out the reaction CMP + ATP = CDP + ADP. The enzyme catalyses dCMP + ATP = dCDP + ADP. The sequence is that of Cytidylate kinase from Yersinia pseudotuberculosis serotype O:1b (strain IP 31758).